We begin with the raw amino-acid sequence, 154 residues long: Egg-lysin (154 aa).

The signal sequence occupies residues 1 to 18; the sequence is MKLLVLCIFAMMATLAMS.

In terms of assembly, homodimer. As to expression, sperm.

In terms of biological role, dissolves the egg vitelline layer nonenzymatically during fertilization. It creates a hole of about 3 mu-m in diameter through which the sperm pass. The sequence is that of Egg-lysin from Haliotis walallensis (Flat abalone).